The following is a 366-amino-acid chain: Histidinol-phosphate aminotransferase 2 (366 aa).

Residues 1–11 show a composition bias toward polar residues; the sequence is MQVKDQLSSLQ. Residues 1–21 are disordered; it reads MQVKDQLSSLQPYKPGKSPEQ. N6-(pyridoxal phosphate)lysine is present on Lys222.

This sequence belongs to the class-II pyridoxal-phosphate-dependent aminotransferase family. Histidinol-phosphate aminotransferase subfamily. As to quaternary structure, homodimer. It depends on pyridoxal 5'-phosphate as a cofactor.

It catalyses the reaction L-histidinol phosphate + 2-oxoglutarate = 3-(imidazol-4-yl)-2-oxopropyl phosphate + L-glutamate. It participates in amino-acid biosynthesis; L-histidine biosynthesis; L-histidine from 5-phospho-alpha-D-ribose 1-diphosphate: step 7/9. The polypeptide is Histidinol-phosphate aminotransferase 2 (Bacillus cereus (strain ATCC 10987 / NRS 248)).